We begin with the raw amino-acid sequence, 84 residues long: Anaphase-promoting complex subunit 11 (84 aa).

Zn(2+) contacts are provided by Cys-23, Cys-26, Cys-34, Cys-37, Cys-44, Cys-51, His-53, His-56, His-58, Cys-59, Cys-73, and Cys-76. The RING-type zinc finger occupies 34 to 77 (CPDCKVPGDDCPLVWGQCSHCFHMHCILKWLHAQQVQQHCPMCR).

The protein belongs to the RING-box family. In terms of assembly, the mammalian APC/C is composed at least of 14 distinct subunits ANAPC1, ANAPC2, CDC27/APC3, ANAPC4, ANAPC5, CDC16/APC6, ANAPC7, CDC23/APC8, ANAPC10, ANAPC11, CDC26/APC12, ANAPC13, ANAPC15 and ANAPC16 that assemble into a complex of at least 19 chains with a combined molecular mass of around 1.2 MDa; APC/C interacts with FZR1 and FBXO5. Interacts with the cullin domain of ANAPC2. Interacts with UBE2D2. Post-translationally, auto-ubiquitinated. In terms of tissue distribution, expressed at high levels in skeletal muscle and heart; in moderate levels in brain, kidney, and liver; and at low levels in colon, thymus, spleen, small intestine, placenta, lung and peripheral blood leukocyte.

It localises to the cytoplasm. The protein localises to the nucleus. It participates in protein modification; protein ubiquitination. Functionally, together with the cullin protein ANAPC2, constitutes the catalytic component of the anaphase promoting complex/cyclosome (APC/C), a cell cycle-regulated E3 ubiquitin ligase that controls progression through mitosis and the G1 phase of the cell cycle. The APC/C complex acts by mediating ubiquitination and subsequent degradation of target proteins: it mainly mediates the formation of 'Lys-11'-linked polyubiquitin chains and, to a lower extent, the formation of 'Lys-48'- and 'Lys-63'-linked polyubiquitin chains. The APC/C complex catalyzes assembly of branched 'Lys-11'-/'Lys-48'-linked branched ubiquitin chains on target proteins. May recruit the E2 ubiquitin-conjugating enzymes to the complex. This Homo sapiens (Human) protein is Anaphase-promoting complex subunit 11 (ANAPC11).